We begin with the raw amino-acid sequence, 943 residues long: MGKKRVYEFAKEMHVDNKDVIDIAKNLGIEVKNHMSSIDQDQEAKIKGMLSKQSAGKAPSSQAAKTPAKAAKTSSAAHKEAAKKPVAASAKSNDHADVAEHSQKNAKPAAKQENKPARSNKTSDGKIILSKSTILRPRSTQTAHTNTNHNRGGNTASANNTANGRNSNRSNNNNNNRSANNANRSGNNNRSNERNRNDRNRRFDNQRVTGPMPRAGRPTAANGNPRPVAGNGGKFVKPASERQQPKRQEAVKPANAASKRSEQPRTERPRTEQPAATTNQRFTKPAPVPAAAAPKPASAGSQDNRNSRRGGGNSNFGRSNSYGNRNGFNRNNRRNKKNKRRQQSAPKKEMPQRKERPLPETLIYEVGMNAQDLGKILHREPAELIKKLFMLGVMVNQNQSLDKDTIELLATDYGIDAQEKVHEDISDLDKVFEEENKNQDNLQPRPPVVTIMGHVDHGKTTLLDKLRHTHVTEGEAGGITQHIGAYQVKLRDRLITFLDTPGHAAFTNMRARGADITDIVVLVVAADDGVMPQTIEAIHHAQAAKAPIIVAVNKIDKPGANPDHVMEQLTEYGLIPEDWGGDTIFVKISAKFGKNIDELLEMILLEADVLELKANPDQKAVGTVIEARLDKGKGPVATVLVQQGTLHTGDPIVVGNTFGRVRAMTNDHGRRVKDALPSMPVEITGINDVPQSADKFVVFADERTARAAGEERAKRAQEEERKNTNHVTLDNLFETMKEGQLKEVDVIIKADVQGSVEALAGSLEKIEVKGVRVNIIHQAVGAINESDVTLAAASNAIIIGFNVRPTALAKAQAEQDDVDIRLHSVIYKAIEEVEAAMKGMLEPTYEEKVIGTVTVRETIPVSKVGTVVGGYVDSGYITRDAGVRLVRDGIVKYEGKLGSLRRFKDDVKEVRQGFELGLTIENYNDIKVDDQIEAFTMEQVPVK.

The disordered stretch occupies residues 46-359; that stretch reads IKGMLSKQSA…MPQRKERPLP (314 aa). A compositionally biased stretch (low complexity) spans 57–76; it reads KAPSSQAAKTPAKAAKTSSA. 2 stretches are compositionally biased toward basic and acidic residues: residues 92-103 and 110-124; these read SNDHADVAEHSQ and AKQE…KTSD. The segment covering 130–141 has biased composition (polar residues); that stretch reads SKSTILRPRSTQ. Low complexity predominate over residues 142–190; sequence TAHTNTNHNRGGNTASANNTANGRNSNRSNNNNNNRSANNANRSGNNNR. Composition is skewed to basic and acidic residues over residues 191-205, 239-250, and 259-271; these read SNER…RFDN, ASERQQPKRQEA, and KRSE…RPRT. Low complexity-rich tracts occupy residues 289–299 and 315–330; these read PAAAAPKPASA and NFGR…GFNR. Residues 331–342 are compositionally biased toward basic residues; the sequence is NNRRNKKNKRRQ. Positions 346–358 are enriched in basic and acidic residues; sequence PKKEMPQRKERPL. The tr-type G domain maps to 444 to 613; that stretch reads PRPPVVTIMG…LLEADVLELK (170 aa). Residues 453–460 are G1; sequence GHVDHGKT. Residue 453-460 coordinates GTP; the sequence is GHVDHGKT. The tract at residues 478-482 is G2; it reads GITQH. Positions 499 to 502 are G3; that stretch reads DTPG. Residues 499 to 503 and 553 to 556 each bind GTP; these read DTPGH and NKID. A G4 region spans residues 553–556; it reads NKID. Residues 589 to 591 form a G5 region; the sequence is SAK.

Belongs to the TRAFAC class translation factor GTPase superfamily. Classic translation factor GTPase family. IF-2 subfamily.

It is found in the cytoplasm. In terms of biological role, one of the essential components for the initiation of protein synthesis. Protects formylmethionyl-tRNA from spontaneous hydrolysis and promotes its binding to the 30S ribosomal subunits. Also involved in the hydrolysis of GTP during the formation of the 70S ribosomal complex. This chain is Translation initiation factor IF-2, found in Lacticaseibacillus casei (strain BL23) (Lactobacillus casei).